We begin with the raw amino-acid sequence, 77 residues long: Large ribosomal subunit protein bL28 (77 aa).

This sequence belongs to the bacterial ribosomal protein bL28 family.

The protein is Large ribosomal subunit protein bL28 of Methylibium petroleiphilum (strain ATCC BAA-1232 / LMG 22953 / PM1).